The primary structure comprises 87 residues: HssA/B-like protein 54 (87 aa).

It belongs to the hssA/B family.

The protein is HssA/B-like protein 54 (hssl54) of Dictyostelium discoideum (Social amoeba).